A 556-amino-acid polypeptide reads, in one-letter code: Formate--tetrahydrofolate ligase (556 aa).

65–72 (TPAGEGKS) contributes to the ATP binding site.

Belongs to the formate--tetrahydrofolate ligase family.

The catalysed reaction is (6S)-5,6,7,8-tetrahydrofolate + formate + ATP = (6R)-10-formyltetrahydrofolate + ADP + phosphate. The protein operates within one-carbon metabolism; tetrahydrofolate interconversion. This Streptococcus equi subsp. zooepidemicus (strain MGCS10565) protein is Formate--tetrahydrofolate ligase.